Consider the following 256-residue polypeptide: Pro-opiomelanocortin (256 aa).

The N-terminal stretch at 1–26 is a signal peptide; that stretch reads MPRSCYSRSGTLLLALLLQISMEVRG. An intrachain disulfide couples Cys28 to Cys50. Residue Thr71 is glycosylated (O-linked (GalNAc...) threonine). Phe87 is modified (phenylalanine amide). Positions 88–120 are disordered; it reads GRGNSSGASQKREEEAAAADPGFHGDGVEPGLR. Asn91 carries N-linked (GlcNAc...) asparagine glycosylation. The propeptide occupies 100–122; that stretch reads EEEAAAADPGFHGDGVEPGLRED. Ser125 is subject to N-acetylserine; in Corticotropin. The residue at position 137 (Val137) is a Valine amide. Ser155 carries the post-translational modification Phosphoserine.

This sequence belongs to the POMC family. Post-translationally, specific enzymatic cleavages at paired basic residues yield the different active peptides. As to expression, ACTH and MSH are produced by the pituitary gland.

The protein localises to the secreted. In terms of biological role, ACTH stimulates the adrenal glands to release cortisol. Its function is as follows. MSH (melanocyte-stimulating hormone) increases the pigmentation of skin by increasing melanin production in melanocytes. Functionally, beta-endorphin and Met-enkephalin are endogenous opiates. Stimulates the adrenal glands to release cortisol. In terms of biological role, anorexigenic peptide. Increases the pigmentation of skin by increasing melanin production in melanocytes. Its function is as follows. Increases the pigmentation of skin by increasing melanin production in melanocytes. Functionally, endogenous orexigenic opiate. Endogenous opiate. In Cavia porcellus (Guinea pig), this protein is Pro-opiomelanocortin (POMC).